A 315-amino-acid chain; its full sequence is Ribosomal RNA small subunit methyltransferase H (315 aa).

S-adenosyl-L-methionine is bound by residues 33-35 (GGH), Asp-52, Phe-84, Asp-106, and Gln-113. Positions 290-315 (PITASTSELENNNRSHSAKLRVAEKL) are disordered. The segment covering 292 to 304 (TASTSELENNNRS) has biased composition (polar residues).

The protein belongs to the methyltransferase superfamily. RsmH family.

It localises to the cytoplasm. The catalysed reaction is cytidine(1402) in 16S rRNA + S-adenosyl-L-methionine = N(4)-methylcytidine(1402) in 16S rRNA + S-adenosyl-L-homocysteine + H(+). Its function is as follows. Specifically methylates the N4 position of cytidine in position 1402 (C1402) of 16S rRNA. The sequence is that of Ribosomal RNA small subunit methyltransferase H from Lactobacillus helveticus (strain DPC 4571).